A 299-amino-acid chain; its full sequence is Coenzyme PQQ synthesis protein B (299 aa).

This sequence belongs to the PqqB family.

The protein operates within cofactor biosynthesis; pyrroloquinoline quinone biosynthesis. Its function is as follows. May be involved in the transport of PQQ or its precursor to the periplasm. This chain is Coenzyme PQQ synthesis protein B, found in Methylobacterium nodulans (strain LMG 21967 / CNCM I-2342 / ORS 2060).